Consider the following 695-residue polypeptide: Adhesion G protein-coupled receptor F4 (695 aa).

The N-terminal stretch at 1–21 (MKMKSQATMICCLVFFLSTEC) is a signal peptide. The Extracellular segment spans residues 22-406 (SHYRSKIHLK…TDKVLDYITC (385 aa)). N-linked (GlcNAc...) asparagine glycosylation is found at N61, N169, N177, N209, N229, N250, N257, N263, N264, N286, N309, and N340. One can recognise a GAIN-B domain in the interval 249–397 (HNTSEKSLNF…SILMSSKSMT (149 aa)). Intrachain disulfides connect C349–C376 and C364–C378. The GPS stretch occupies residues 349–397 (CVGWHSKKRRWDEKACQMMLDIRNEVKCRCNYTSVVMSFSILMSSKSMT). N-linked (GlcNAc...) asparagine glycosylation occurs at N379. Residues 407–427 (IGLSVSILSLVLCLIIEATVW) form a helical membrane-spanning segment. At 428-440 (SRVVVTEISYMRH) the chain is on the cytoplasmic side. Residues 441–461 (VCIVNIAVSLLTANVWFIIGS) form a helical membrane-spanning segment. Topologically, residues 462–485 (HFNIKAQDYNMCVAVTFFSHFFYL) are extracellular. A helical membrane pass occupies residues 486–506 (SLFFWMLFKALLIIYGILVIF). Residues 507–515 (RRMMKSRMM) lie on the Cytoplasmic side of the membrane. A helical transmembrane segment spans residues 516-536 (VIGFAIGYGCPLIIAVTTVAI). Residues 537–561 (TEPEKGYMRPEACWLNWDNTKALLA) are Extracellular-facing. Residues 562-582 (FAIPAFVIVAVNLIVVLVVAV) traverse the membrane as a helical segment. Topologically, residues 583–606 (NTQRPSIGSSKSQDVVIIMRISKN) are cytoplasmic. A helical membrane pass occupies residues 607 to 627 (VAILTPLLGLTWGFGIATLIE). The Extracellular portion of the chain corresponds to 628–634 (GTSLTFH). The chain crosses the membrane as a helical span at residues 635–655 (IIFALLNAFQGFFILLFGTIM). Residues 656–695 (DHKIRDALRMRMSSLKGKSRAAENASLGPTNGSKLMNRQG) are Cytoplasmic-facing. A disordered region spans residues 674–695 (SRAAENASLGPTNGSKLMNRQG). Residues 682–695 (LGPTNGSKLMNRQG) are compositionally biased toward polar residues.

The protein belongs to the G-protein coupled receptor 2 family. Adhesion G-protein coupled receptor (ADGR) subfamily.

The protein localises to the membrane. Its function is as follows. Orphan receptor. The polypeptide is Adhesion G protein-coupled receptor F4 (ADGRF4) (Homo sapiens (Human)).